The primary structure comprises 255 residues: Pyrroloquinoline-quinone synthase (255 aa).

The protein belongs to the PqqC family.

It carries out the reaction 6-(2-amino-2-carboxyethyl)-7,8-dioxo-1,2,3,4,7,8-hexahydroquinoline-2,4-dicarboxylate + 3 O2 = pyrroloquinoline quinone + 2 H2O2 + 2 H2O + H(+). It functions in the pathway cofactor biosynthesis; pyrroloquinoline quinone biosynthesis. Ring cyclization and eight-electron oxidation of 3a-(2-amino-2-carboxyethyl)-4,5-dioxo-4,5,6,7,8,9-hexahydroquinoline-7,9-dicarboxylic-acid to PQQ. In Cereibacter sphaeroides (strain ATCC 17025 / ATH 2.4.3) (Rhodobacter sphaeroides), this protein is Pyrroloquinoline-quinone synthase.